Here is a 197-residue protein sequence, read N- to C-terminus: Tyrosine-protein phosphatase-like protein OCA2 (197 aa).

The Tyrosine-protein phosphatase domain maps to 10–160; the sequence is SPVVSTDVSL…FETNLKIPRN (151 aa). Ser181 is modified (phosphoserine).

It belongs to the protein-tyrosine phosphatase family.

The protein localises to the cytoplasm. Its function is as follows. Required for normal growth in the presence of linoleic acid hydroperoxide (LoaOOH). The protein is Tyrosine-protein phosphatase-like protein OCA2 (OCA2) of Saccharomyces cerevisiae (strain ATCC 204508 / S288c) (Baker's yeast).